A 166-amino-acid chain; its full sequence is NAD(P)H-quinone oxidoreductase subunit I, chloroplastic (166 aa).

4Fe-4S ferredoxin-type domains lie at 55–84 and 95–124; these read GRIHFEFDKCIACEVCVRVCPIDLPVVDWK and LNYSIDFGICIFCGNCVEYCPTNCLSMTEE. Positions 64, 67, 70, 74, 104, 107, 110, and 114 each coordinate [4Fe-4S] cluster.

It belongs to the complex I 23 kDa subunit family. As to quaternary structure, NDH is composed of at least 16 different subunits, 5 of which are encoded in the nucleus. [4Fe-4S] cluster is required as a cofactor.

The protein resides in the plastid. The protein localises to the chloroplast thylakoid membrane. It catalyses the reaction a plastoquinone + NADH + (n+1) H(+)(in) = a plastoquinol + NAD(+) + n H(+)(out). The enzyme catalyses a plastoquinone + NADPH + (n+1) H(+)(in) = a plastoquinol + NADP(+) + n H(+)(out). NDH shuttles electrons from NAD(P)H:plastoquinone, via FMN and iron-sulfur (Fe-S) centers, to quinones in the photosynthetic chain and possibly in a chloroplast respiratory chain. The immediate electron acceptor for the enzyme in this species is believed to be plastoquinone. Couples the redox reaction to proton translocation, and thus conserves the redox energy in a proton gradient. The chain is NAD(P)H-quinone oxidoreductase subunit I, chloroplastic from Chaetymenia peduncularis (Daisy).